The sequence spans 566 residues: DNA ligase B (566 aa).

Lys125 serves as the catalytic N6-AMP-lysine intermediate.

The protein belongs to the NAD-dependent DNA ligase family. LigB subfamily.

It carries out the reaction NAD(+) + (deoxyribonucleotide)n-3'-hydroxyl + 5'-phospho-(deoxyribonucleotide)m = (deoxyribonucleotide)n+m + AMP + beta-nicotinamide D-nucleotide.. Functionally, catalyzes the formation of phosphodiester linkages between 5'-phosphoryl and 3'-hydroxyl groups in double-stranded DNA using NAD as a coenzyme and as the energy source for the reaction. This is DNA ligase B from Pseudomonas putida (strain ATCC 700007 / DSM 6899 / JCM 31910 / BCRC 17059 / LMG 24140 / F1).